Consider the following 346-residue polypeptide: C5a anaphylatoxin chemotactic receptor 1 (346 aa).

Over 1–33 the chain is Extracellular; it reads MDDNNSDWTSYDFGNDTIPSPNEISLSHIGTRH. N-linked (GlcNAc...) asparagine glycans are attached at residues N4 and N15. A helical transmembrane segment spans residues 34–60; that stretch reads WITLVCYGIVFLLGVPGNALVVWVTGF. Topologically, residues 61–65 are cytoplasmic; the sequence is RMPNS. Residues 66–89 traverse the membrane as a helical segment; it reads VNAQWFLNLAIADLLCCLSLPILM. Topologically, residues 90 to 106 are extracellular; it reads VPLAQDQHWPFGALACK. Cysteines 105 and 183 form a disulfide. Residues 107 to 128 traverse the membrane as a helical segment; it reads LFSGIFYMMMYCSVLLLVVISL. Topologically, residues 129-149 are cytoplasmic; it reads DRFLLVTKPVWCQNNRQPRQA. Residues 150-170 traverse the membrane as a helical segment; sequence RILCFIIWILGLLGSSPYFAH. At 171 to 194 the chain is on the extracellular side; the sequence is MEIQHHSETKTVCTGSYSSLGHAW. The helical transmembrane segment at 195–220 threads the bilayer; sequence AITIIRSFLFFLLPFLIICISHWKVY. At 221-238 the chain is on the cytoplasmic side; the sequence is HMTSSGRRQRDKSSRTLR. The helical transmembrane segment at 239 to 261 threads the bilayer; that stretch reads VILALVLGFFLCWTPLHIVDLLI. Residues 262–279 lie on the Extracellular side of the membrane; that stretch reads LVSDQPSERFEVNLNLAH. A helical transmembrane segment spans residues 280–300; the sequence is VLTLCLAYINSCLNPLLYVCL. The Cytoplasmic segment spans residues 301–346; sequence GRGFKENLISSLRSVLHFASEAPTHGPSMTTNSKSTTDGVFREKPV. The disordered stretch occupies residues 323-346; the sequence is PTHGPSMTTNSKSTTDGVFREKPV. Residues 327-338 are compositionally biased toward polar residues; it reads PSMTTNSKSTTD.

The protein belongs to the G-protein coupled receptor 1 family.

The protein localises to the cell membrane. Functionally, receptor for the chemotactic and inflammatory peptide anaphylatoxin C5a. This receptor stimulates chemotaxis, granule enzyme release and superoxide anion production. This is C5a anaphylatoxin chemotactic receptor 1 (c5ar1) from Danio rerio (Zebrafish).